Reading from the N-terminus, the 3013-residue chain is MSNITIDPDVKPGEYVIKSLFAEFAVQAEKKIEVVMAEPLEKLLSRSLQRGEDLQFDQLISSMSSVAEHCLPSLLRTLFDWYRRQNGTEDESYEYRPRSSTKSKGDEQQRERDYLLERRDLAVDFIFCLVLVEVLKQIPVHPVPDPLVHEVLNLAFKHFKHKEGYSGTNTGNVHIIADLYAEVIGVLAQSKFQAVRKKFVTELKELRQKEQSPHVVQSVISLIMGMKFFRVKMYPVEDFEASFQFMQECAQYFLEVKDKDIKHALAGLFVEILIPVAAAVKNEVNVPCLKNFVEMLYQTTFELSSRKKHSLALYPLITCLLCVSQKQFFLNNWHIFLQNCLSHLKNKDPKMSRVALESLYRLLWVYVIRIKCESNTVTQSRLMSIVSALFPKGSRSVVPRDTPLNIFVKIIQFIAQERLDFAMKEIIFDLLSVGKSTKTFTINPERMNIGLRVFLVIADSLQQKDGEPPMPTTGVILPSGNTLRVKKIFLNKTLTDEEAKVIGMSVYYPQVRKALDSILRHLDKEVGRPMCMTSVQMSNKEPEDMITGERKPKIDLFRTCIAAIPRLIPDGMSRTDLIELLARLTIHMDEELRALAFNTLQALMLDFPDWREDVLSGFVYFIVREVTDVHPTLLDNAVKMLVQLINQWKQAAQMHNKNQDTQHGVANGASHPPPLERSPYSNVFHVVEGFALVILCSSRPATRRLAVSVLREIRALFALLEIPKGDDELAIDVMDRLSPSILESFIHLTGADQTTLLYCPSSIDLQTLAEWNSSPISHQFDVISPSHIWIFAHVTQGQDPWIISLSSFLKQENLPKHCSTAVSYAWMFAYTRLQLLSPQVDINSPINAKKVNTTTSSDSYIGLWRNYLILCCSAATSSSSTSAGSVRCSPPETLASTPDSGYSIDSKIIGIPSPSSLFKHIVPMMRSESMEITESLVLGLGRTNPGAFRELIEELHPIIKEALERRPENMKRRRRRDILRVQLVRIFELLADAGVISHSASGGLDNETHFLNNTLLEYVDLTRQLLEAENEKDSDTLKDIRCHFSALVANIIQNVPVHQRRSIFPQQSLRHSLFMLFSHWAGPFSIMFTPLDRYSDRNMQINRHQYCALKAMSAVLCCGPVADNVGLSSDGYLYKWLDNILDSLDKKVHQLGCEAVTLLLELNPDQSNLMYWAVDRCYTGSGRVAAGCFKAIANVFQNRDYQCDTVMLLNLILFKAADSSRSIYEVAMQLLQILEPKMFRYAHKLEVQRTDGVLSQLSPLPHLYSVSYYQLSEELARAYPELTLAIFSEISQRIQTAHPAGRQVMLHYLLPWMNNIELVDLKPLPTARRHDEDEDDSLKDRELMVTSRRWLRGEGWGSPQATAMVLNNLMYMTAKYGDELAWSEVENVWTTLADGWPKNLKIILHFLISICGVNSEPSLLPYVKKVIVYLGRDKTMQLLEELVSELQLTDPVSSGVTHMDNPPYYRITSSYKIPSVTSGTTSSSNTMVAPTDGNPDNKPIKENIEESYVHLDIYSGLNSHLNRQHHRLESRYSSSSGGSYEEEKSDSMPLYSNWRLKVMEHNQGEPLPFPPAGGCWSPLVDYVPETSSPGLPLHRCNIAVILLTDLIIDHSVKVEWGSYLHLLLHAIFIGFDHCHPEVYEHCKRLLLHLLIVMGPNSNIRTVASVLLRNKEFNEPRVLTVKQVAHLDYNFTAGINDFIPDYQPSPMTDSGLSSSSTSSSISLGNNSAAISHLHTTILNEVDISVEQDGKVKTLMEFITSRKRGPLWNHEDVSAKNPSIKSAEQLTTFLKHVVSVFKQSSSEGIHLEHHLSEVALQTALSCSSRHYAGRSFQIFRALKQPLTATTLSDVLSRLVETVGDPGEDAQGFVIELLLTLESAIDTLAETMKHYDLLSALSQTSYHDPIMGNKYAANRKSTGQLNLSTSPINSSSYLGYNSNARSNSLRLSLIGDRRGDRRRSNTLDIMDGRINHSSSLARTRSLSSLREKGMYDVQSTTEPTNLMATIFWIAASLLESDYEYEYLLALRLLNKLLIHLPLDKSESREKIENVQSKLKWTNFPGLQQLFLKGFTSASTQEMTVHLLSKLISVSKHTLVDPSQLSGFPLNILCLLPHLIQHFDSPTQFCKETASRIAKVCAEEKCPTLVNLAHMMSLYSTHTYSRDCSNWINVVCRYLHDSFSDTTFNLVTYLAELLEKGLSSMQQSLLQIIYSLLSHIDLSAAPAKQFNLEIIKIIGKYVQSPYWKEALNILKLVVSRSASLVVPSDIPKTYGGDTGSPEISFTKIFNNVSKELPGKTLDFHFDISETPIIGNKYGDQHSAAGRNGKPKVIAVTRSTSSTSSGSNSNALVPVSWKRPQLSQRRTREKLMNVLSLCGPESGLPKNPSVVFSSNEDLEVGDQQTSLISTTEDINQEEEVAVEDNSSEQQFGVFKDFDFLDVELEDAEGESMDNFNWGVRRRSLDSIDKGDTPSLQEYQCSSSTPSLNLTNQEDTDESSEEEAALTASQILSRTQMLNSDSATDETIPDHPDLLLQSEDSTGSITTEEVLQIRDETPTLEASLDNANSRLPEDTTSVLKEEHVTTFEDEGSYIIQEQQESLVCQGILDLEETEMPEPLAPESYPESVCEEDVTLALKELDERCEEEEADFSGLSSQDEEEQDGFPEVQTSPLPSPFLSAIIAAFQPVAYDDEEEAWRCHVNQMLSDTDGSSAVFTFHVFSRLFQTIQRKFGEITNEAVSFLGDSLQRIGTKFKSSLEVMMLCSECPTVFVDAETLMSCGLLETLKFGVLELQEHLDTYNVKREAAEQWLDDCKRTFGAKEDMYRINTDAQQMEILAELELCRRLYKLHFQLLLLFQAYCKLINQVNTIKNEAEVINMSEELAQLESILKEAESASENEEIDISKAAQTTIETAIHSLIETLKNKEFISAVAQVKAFRSLWPSDIFGSCEDDPVQTLLHIYFHHQTLGQTGSFAVIGSNLDMSEANYKLMELNLEIRESLRMVQSYQLLAQAKPMGNMVSTGF.

Ser2 bears the N-acetylserine mark. Positions 90-109 (DESYEYRPRSSTKSKGDEQQ) are disordered. Ser844 is subject to Phosphoserine. 2 disordered regions span residues 878–897 (SSST…LAST) and 1476–1498 (VTSG…PDNK). Residues 1476–1486 (VTSGTTSSSNT) are compositionally biased toward low complexity. Phosphoserine is present on residues Ser1914, Ser1935, Ser1941, Ser1945, and Ser1957. Thr1959 is subject to Phosphothreonine. Residues Ser1978, Ser2272, and Ser2454 each carry the phosphoserine modification. A disordered region spans residues 2459 to 2492 (DKGDTPSLQEYQCSSSTPSLNLTNQEDTDESSEE). Positions 2464 to 2483 (PSLQEYQCSSSTPSLNLTNQ) are enriched in polar residues. Phosphoserine is present on Ser2499. Disordered stretches follow at residues 2508–2567 (LNSD…DTTS) and 2636–2660 (EEEA…EVQT). Composition is skewed to polar residues over residues 2528–2539 (SEDSTGSITTEE) and 2555–2567 (DNAN…DTTS).

This sequence belongs to the furry protein family. In terms of tissue distribution, widely expressed with higher expression in colon, placenta, brain and cells of lymphoid origin.

Functionally, plays a key role in maintaining the integrity of polarized cell extensions during morphogenesis, regulates the actin cytoskeleton and plays a key role in patterning sensory neuron dendritic fields by promoting avoidance between homologous dendrites as well as by limiting dendritic branching. May function as a transcriptional activator. The sequence is that of Protein furry homolog-like (FRYL) from Homo sapiens (Human).